The following is a 693-amino-acid chain: MEKRGPKRRQQAAHLSCELCRERKVKCDKLDPCTNCSSAGVICVPVRRPRLPRGAHAQRLRRISPEDPEAPIQIDIASPPDTGTIAEDDLKERIRRLEALVDSMRSSNHISKQNQEAQDTIESTLNGIDDDSLLIKGPRVHPSDGGLRILGLSGSSSPETGWASIIEDRDISMQLCQVYLLNVDPVIKILHRPSLEKWMLQGQRYLGFPERHAAVESLGAAICYVAATSLTETQSWARFHTTKSSIVARARRTCETTLEKSSPLLSPEVTTLQAFLLYLVARRSEDPSRAVWTLMAFAVRIAKALDLPRGTDDNFFGQQMRKRLWLAICLLDFQTSLSQPSEPLITVAEATSSFSPPKHINDSDFEPTTSHDIPDREGLTDTTFSLVSYHVQAAGRLLNFEPSVKDNGSRQQHVQHFEQRTLRLLFYCDPESTPYAWFTWHRIQCFVSGARLSAIRPLIYQHGDHPIPIPDTNEGTSILSLALNILEKVQLVHTDPRGEGFRWFVTVPWQPLAIAISECYICQDRALVQRAWPIVEAAFQQHEADVSGSSKAISTTLERLMCRVRGKLLQSLGASTKITTSPTFGTTNAANTLSVPHTPPSRSSITSSGDLLSNWSWTTAELSRPGEDPALLTEALISTSPQKIDPLLFSLDSQLLIAGQEQLVEADQSWAAWEEVIASLHDDETGRADMFLS.

The segment at residues 17–43 (CELCRERKVKCDKLDPCTNCSSAGVIC) is a DNA-binding region (zn(2)-C6 fungal-type). Residues 589–608 (AANTLSVPHTPPSRSSITSS) are disordered.

It localises to the nucleus. Functionally, transcription factor that specifically regulates the neosartoricin B biosynthesis gene cluster. In Trichophyton rubrum (strain ATCC MYA-4607 / CBS 118892) (Athlete's foot fungus), this protein is C6 finger domain transcription factor nscR.